A 557-amino-acid chain; its full sequence is Tight junction-associated protein 1 (557 aa).

The segment at M1 to T37 is disordered. Residue T2 is modified to N-acetylthreonine. Residues A14 to L23 show a composition bias toward basic and acidic residues. Residues M42–D171 adopt a coiled-coil conformation. Disordered regions lie at residues M266 to E303 and A309 to G328. Residues P274–Q286 show a composition bias toward pro residues. At S300 the chain carries Phosphoserine. Residues Y316–L325 are compositionally biased toward pro residues. The residue at position 318 (T318) is a Phosphothreonine. 2 positions are modified to phosphoserine: S320 and S345. The segment at E364–D409 is disordered. A compositionally biased stretch (polar residues) spans T378–H388. Residues P394 to S405 are compositionally biased toward low complexity. T422 bears the Phosphothreonine mark. A compositionally biased stretch (basic and acidic residues) spans L439–V456. A disordered region spans residues L439 to N557. Phosphoserine is present on S491. Residues R530 to R542 are compositionally biased toward basic residues. The residue at position 545 (S545) is a Phosphoserine. Positions L546–N557 are enriched in polar residues.

In terms of assembly, interacts with DLG1. Interacts with ARF6 (GTP-bound form). As to expression, ubiquitously expressed.

Its subcellular location is the golgi apparatus. It localises to the trans-Golgi network. It is found in the cell junction. The protein resides in the tight junction. The protein localises to the cell membrane. Functionally, plays a role in regulating the structure of the Golgi apparatus. The sequence is that of Tight junction-associated protein 1 from Homo sapiens (Human).